Reading from the N-terminus, the 81-residue chain is Short neurotoxin SN160 (81 aa).

An N-terminal signal peptide occupies residues 1–21 (MKTLLLTLVVVTIVCLDLGYT). 4 disulfides stabilise this stretch: Cys24/Cys43, Cys38/Cys60, Cys62/Cys73, and Cys74/Cys79.

This sequence belongs to the three-finger toxin family. Short-chain subfamily. Type I alpha-neurotoxin sub-subfamily. As to expression, expressed by the venom gland.

The protein resides in the secreted. Its function is as follows. Binds to muscle nicotinic acetylcholine receptor (nAChR) and inhibit acetylcholine from binding to the receptor, thereby impairing neuromuscular transmission. The protein is Short neurotoxin SN160 of Hydrophis hardwickii (Hardwick's spine-bellied seasnake).